Here is a 282-residue protein sequence, read N- to C-terminus: Para-Rep C1 (282 aa).

Residues 1–99 form the CRESS-DNA virus Rep endonuclease domain; the sequence is MASKRWCFTL…ETLISEIGAP (99 aa). Positions 7-10 match the RCR-1 motif; that stretch reads CFTL. Positions 38 and 47 each coordinate a divalent metal cation. The RCR-2 signature appears at 47–49; the sequence is HLQ. The Nuclear localization signal signature appears at 56-77; that stretch reads KMIRLGGLKKKFGYRAHWEIAK. Y86 functions as the For DNA cleavage activity in the catalytic mechanism. The RCR-3 motif lies at 86-89; sequence YCTK. S94 is an a divalent metal cation binding site. 174 to 182 is a binding site for ATP; the sequence is GSDGGEGKS.

Belongs to the nanoviridea/circoviridae replication-associated protein family. As to quaternary structure, homooligomer (Potential). Rep binds to repeated DNA motifs (iterons). Requires Mg(2+) as cofactor. Mn(2+) serves as cofactor.

It localises to the host nucleus. It carries out the reaction ATP + H2O = ADP + phosphate + H(+). Initiates and terminates the replication only of its own subviral DNA molecule. The closed circular ssDNA genome is first converted to a superhelical dsDNA. Rep binds a specific hairpin at the genome origin of replication. Introduces an endonucleolytic nick within the intergenic region of the genome, thereby initiating the rolling circle replication (RCR). Following cleavage, binds covalently to the 5'-phosphate of DNA as a tyrosyl ester. The cleavage gives rise to a free 3'-OH that serves as a primer for the cellular DNA polymerase. The polymerase synthesizes the (+) strand DNA by rolling circle mechanism. After one round of replication, a Rep-catalyzed nucleotidyl transfer reaction releases a circular single-stranded virus genome, thereby terminating the replication. Displays origin-specific DNA cleavage, nucleotidyl transferase, ATPase and helicase activities. The protein is Para-Rep C1 (C1) of Faba bean necrotic yellows C11 alphasatellite (FBNYC11A).